The primary structure comprises 198 residues: 7-methyl-GTP pyrophosphatase (198 aa).

Aspartate 72 (proton acceptor) is an active-site residue.

The protein belongs to the Maf family. YceF subfamily. It depends on a divalent metal cation as a cofactor.

It localises to the cytoplasm. It catalyses the reaction N(7)-methyl-GTP + H2O = N(7)-methyl-GMP + diphosphate + H(+). Functionally, nucleoside triphosphate pyrophosphatase that hydrolyzes 7-methyl-GTP (m(7)GTP). May have a dual role in cell division arrest and in preventing the incorporation of modified nucleotides into cellular nucleic acids. This Idiomarina loihiensis (strain ATCC BAA-735 / DSM 15497 / L2-TR) protein is 7-methyl-GTP pyrophosphatase.